A 120-amino-acid chain; its full sequence is PE family protein PE10 (120 aa).

Positions 29-59 are disordered; the sequence is GQVTGNGGSGNSGTSAAAANPNSDNTASIAD. The span at 40-51 shows a compositional bias: low complexity; sequence SGTSAAAANPNS.

It belongs to the mycobacterial PE family. As to quaternary structure, forms a complex with PE9. The complex interacts with human TLR4.

It is found in the secreted. It localises to the cell wall. Functionally, together with PE9, induces macrophage apoptosis through human Toll-like receptor 4 (TLR4) signaling pathway. Interaction with TLR4 leads to increased levels of phospho-IRF-3, increase in the transcript levels of IFN-beta and pro-apoptotic genes, up-regulation of IL-10, down-regulation of IL-1b and enhanced levels of macrophage apoptosis. The protein is PE family protein PE10 of Mycobacterium tuberculosis (strain ATCC 25618 / H37Rv).